The sequence spans 537 residues: Chaperonin GroEL (537 aa).

ATP contacts are provided by residues 30–33, 87–91, G414, 477–479, and D493; these read TLGP, DGTTT, and DAV.

Belongs to the chaperonin (HSP60) family. Forms a cylinder of 14 subunits composed of two heptameric rings stacked back-to-back. Interacts with the co-chaperonin GroES.

Its subcellular location is the cytoplasm. It catalyses the reaction ATP + H2O + a folded polypeptide = ADP + phosphate + an unfolded polypeptide.. In terms of biological role, together with its co-chaperonin GroES, plays an essential role in assisting protein folding. The GroEL-GroES system forms a nano-cage that allows encapsulation of the non-native substrate proteins and provides a physical environment optimized to promote and accelerate protein folding. The sequence is that of Chaperonin GroEL from Coprothermobacter proteolyticus (strain ATCC 35245 / DSM 5265 / OCM 4 / BT).